Here is a 299-residue protein sequence, read N- to C-terminus: Deoxyribonuclease-1-like 2 (299 aa).

A signal peptide spans 1–20 (MGGPRALLAALWALEAAGTA). Active-site residues include glutamate 99 and histidine 170. Cysteines 209 and 245 form a disulfide.

This sequence belongs to the DNase I family. Requires Mg(2+) as cofactor. Ca(2+) serves as cofactor. Preferentially expressed in the skin and up-regulated during keratinocytes differentiation. Highly abundant (at protein level) in the stratum granulosum.

The protein localises to the cytoplasm. The protein resides in the secreted. In terms of biological role, divalent cation-dependent acid DNA endonuclease involved in the breakdown of the nucleus during corneocyte formation of epidermal keratinocytes. May play an immune role by eliminating harmful DNA released into the extracellular environment by damaged epidermal cells. In Homo sapiens (Human), this protein is Deoxyribonuclease-1-like 2 (DNASE1L2).